Consider the following 408-residue polypeptide: UDP-N-acetylglucosamine--N-acetylmuramyl-(pentapeptide) pyrophosphoryl-undecaprenol N-acetylglucosamine transferase (408 aa).

A disordered region spans residues 1–20 (MNDTVKKPTGGRGDDPLPAG). UDP-N-acetyl-alpha-D-glucosamine contacts are provided by residues 41–43 (TAG), N160, R197, S231, and Q327.

This sequence belongs to the glycosyltransferase 28 family. MurG subfamily.

It is found in the cell membrane. It catalyses the reaction di-trans,octa-cis-undecaprenyl diphospho-N-acetyl-alpha-D-muramoyl-L-alanyl-D-glutamyl-meso-2,6-diaminopimeloyl-D-alanyl-D-alanine + UDP-N-acetyl-alpha-D-glucosamine = di-trans,octa-cis-undecaprenyl diphospho-[N-acetyl-alpha-D-glucosaminyl-(1-&gt;4)]-N-acetyl-alpha-D-muramoyl-L-alanyl-D-glutamyl-meso-2,6-diaminopimeloyl-D-alanyl-D-alanine + UDP + H(+). The protein operates within cell wall biogenesis; peptidoglycan biosynthesis. In terms of biological role, cell wall formation. Catalyzes the transfer of a GlcNAc subunit on undecaprenyl-pyrophosphoryl-MurNAc-pentapeptide (lipid intermediate I) to form undecaprenyl-pyrophosphoryl-MurNAc-(pentapeptide)GlcNAc (lipid intermediate II). The polypeptide is UDP-N-acetylglucosamine--N-acetylmuramyl-(pentapeptide) pyrophosphoryl-undecaprenol N-acetylglucosamine transferase (Mycolicibacterium paratuberculosis (strain ATCC BAA-968 / K-10) (Mycobacterium paratuberculosis)).